A 322-amino-acid chain; its full sequence is MSNKPSQLTAGKKLRDADKMSHIPIKVVPSNKSTLLKKPSWMKIKLSSDNTRVNEIKAALRKNNLHSVCEEASCPNLNECFNHGTATFMILGDICTRRCPFCDVGHGKPLAVDANEPKKLAETIKDMKLKYVVITSVDRDDLRDGGAQHFADCIREIRLLNPEIKIEILVPDFKGRMDKALACFEQDLPDVFNHNLETAPHLYKQVRPGADYKWSLKLLQKFKEKHPHIPTKSGLMVGLGETNEDIEQVLTDLRAHDVNMLTLGQYLQPSLDHLAVQRFVPPSEFDELGVKAKALGFDQAACGPLVRSSYHADLQASGQEVK.

7 residues coordinate [4Fe-4S] cluster: Cys-69, Cys-74, Cys-80, Cys-95, Cys-99, Cys-102, and Ser-309. Residues Phe-81–Asp-298 enclose the Radical SAM core domain.

It belongs to the radical SAM superfamily. Lipoyl synthase family. [4Fe-4S] cluster serves as cofactor.

The protein localises to the cytoplasm. It carries out the reaction [[Fe-S] cluster scaffold protein carrying a second [4Fe-4S](2+) cluster] + N(6)-octanoyl-L-lysyl-[protein] + 2 oxidized [2Fe-2S]-[ferredoxin] + 2 S-adenosyl-L-methionine + 4 H(+) = [[Fe-S] cluster scaffold protein] + N(6)-[(R)-dihydrolipoyl]-L-lysyl-[protein] + 4 Fe(3+) + 2 hydrogen sulfide + 2 5'-deoxyadenosine + 2 L-methionine + 2 reduced [2Fe-2S]-[ferredoxin]. The protein operates within protein modification; protein lipoylation via endogenous pathway; protein N(6)-(lipoyl)lysine from octanoyl-[acyl-carrier-protein]: step 2/2. Functionally, catalyzes the radical-mediated insertion of two sulfur atoms into the C-6 and C-8 positions of the octanoyl moiety bound to the lipoyl domains of lipoate-dependent enzymes, thereby converting the octanoylated domains into lipoylated derivatives. This is Lipoyl synthase from Psychromonas ingrahamii (strain DSM 17664 / CCUG 51855 / 37).